The following is a 498-amino-acid chain: MTETSYIMAIDQGTTSSRAIIFDKHGKHIGSSQKEFTQYFPKEGWVEHDANEIWNSVQSVIAGAFIESGIKPVQVAGIGITNQRETTIIWDKKTGKPIYHAIVWQSRQSADIANGLKEAGHEELFHKKTGLIVDSYFSATKIRWILDHVEGAQERAERGELLFGTIDTWLLWKLTDGDAHYTDYSNASRTMLYNIHELKWDEEILKILNIPASMLPEVKSNSEVYGVTKGFHFFGSEVPISGMAGDQQAALFGQMAFEPGMIKNTYGTGSFIVMNTGEKPHISKNNMLTTIGYGINGKVYYALEGSIFVAGSSIQWLRDGLKMLERASDSEEVALQSRSQDEVYVVPAFVGLGAPYWDQEARGAMFGLTRGTTKEDIVKATLQGIAYQVRDVVSTMKEDTGIDMSVLKVDGGAANNEYLMQFQADILNIPIQRAGDLETTALGAAFLAGLAVGFWKDLEELKESYEPGKIFQTQMQEERREELYAGWKKAVNATRAFK.

Threonine 14 lines the ADP pocket. The ATP site is built by threonine 14, threonine 15, and serine 16. Threonine 14 contacts sn-glycerol 3-phosphate. Position 18 (arginine 18) interacts with ADP. Residues arginine 84, glutamate 85, and tyrosine 136 each coordinate sn-glycerol 3-phosphate. Residues arginine 84, glutamate 85, and tyrosine 136 each coordinate glycerol. The residue at position 232 (histidine 232) is a Phosphohistidine; by HPr. Aspartate 246 serves as a coordination point for sn-glycerol 3-phosphate. Residues aspartate 246 and glutamine 247 each contribute to the glycerol site. Residues threonine 268 and glycine 311 each coordinate ADP. The ATP site is built by threonine 268, glycine 311, glutamine 315, and glycine 412. The ADP site is built by glycine 412 and asparagine 416.

This sequence belongs to the FGGY kinase family. In terms of assembly, homotetramer and homodimer (in equilibrium). The phosphoenolpyruvate-dependent sugar phosphotransferase system (PTS), including enzyme I, and histidine-containing protein (HPr) are required for the phosphorylation, which leads to the activation of the enzyme.

The catalysed reaction is glycerol + ATP = sn-glycerol 3-phosphate + ADP + H(+). Its pathway is polyol metabolism; glycerol degradation via glycerol kinase pathway; sn-glycerol 3-phosphate from glycerol: step 1/1. Its activity is regulated as follows. Activated by phosphorylation and inhibited by fructose 1,6-bisphosphate (FBP). Its function is as follows. Key enzyme in the regulation of glycerol uptake and metabolism. Catalyzes the phosphorylation of glycerol to yield sn-glycerol 3-phosphate. The sequence is that of Glycerol kinase from Lactococcus lactis subsp. lactis (strain IL1403) (Streptococcus lactis).